The following is a 265-amino-acid chain: HTH-type transcriptional activator CfaD (265 aa).

The HTH araC/xylS-type domain occupies 164 to 261 (DKVRNVIEKD…GVTPKQFFTY (98 aa)). DNA-binding regions (H-T-H motif) lie at residues 181–202 (GIIA…ESEN) and 228–251 (ISQI…NKHY).

As to quaternary structure, homodimer.

Its function is as follows. Transcriptional activator of the CFA/I adhesin (cfaA and cfaB) genes of enterotoxigenic E.coli at 37 degrees Celsius. Also represses the silencing effect of H-NS (hns). The protein is HTH-type transcriptional activator CfaD of Escherichia coli.